Consider the following 118-residue polypeptide: Large ribosomal subunit protein bL19 (118 aa).

Belongs to the bacterial ribosomal protein bL19 family.

Functionally, this protein is located at the 30S-50S ribosomal subunit interface and may play a role in the structure and function of the aminoacyl-tRNA binding site. This is Large ribosomal subunit protein bL19 from Geobacter sulfurreducens (strain ATCC 51573 / DSM 12127 / PCA).